The primary structure comprises 260 residues: Flavin-dependent thymidylate synthase (260 aa).

The region spanning 2–203 (ISVKLVSYTN…PRLFKYTGPN (202 aa)) is the ThyX domain. FAD is bound by residues serine 56, 80 to 82 (RHR), and glutamine 88. DUMP is bound by residues 77-80 (QLVR), 88-92 (QMSHR), and arginine 142. The short motif at 80–90 (RHRIASYTQMS) is the ThyX motif element. FAD is bound by residues 158-160 (NAR) and asparagine 164. A dUMP-binding site is contributed by arginine 169. Residue arginine 169 is the Involved in ionization of N3 of dUMP, leading to its activation of the active site.

The protein belongs to the thymidylate synthase ThyX family. Homotetramer. FAD serves as cofactor.

The catalysed reaction is dUMP + (6R)-5,10-methylene-5,6,7,8-tetrahydrofolate + NADPH + H(+) = dTMP + (6S)-5,6,7,8-tetrahydrofolate + NADP(+). The protein operates within pyrimidine metabolism; dTTP biosynthesis. Its function is as follows. Catalyzes the reductive methylation of 2'-deoxyuridine-5'-monophosphate (dUMP) to 2'-deoxythymidine-5'-monophosphate (dTMP) while utilizing 5,10-methylenetetrahydrofolate (mTHF) as the methyl donor, and NADPH and FADH(2) as the reductant. The sequence is that of Flavin-dependent thymidylate synthase from Saccharolobus solfataricus (strain ATCC 35092 / DSM 1617 / JCM 11322 / P2) (Sulfolobus solfataricus).